The primary structure comprises 344 residues: Dihydroorotase (344 aa).

2 residues coordinate Zn(2+): H13 and H15. Substrate-binding positions include H15 to R17 and N41. Positions 99, 136, and 174 each coordinate Zn(2+). Position 99 is an N6-carboxylysine (K99). H136 contacts substrate. L219 contributes to the substrate binding site. D247 is a binding site for Zn(2+). D247 is an active-site residue. Substrate-binding residues include H251 and A263.

The protein belongs to the metallo-dependent hydrolases superfamily. DHOase family. Class II DHOase subfamily. As to quaternary structure, homodimer. Zn(2+) is required as a cofactor.

The catalysed reaction is (S)-dihydroorotate + H2O = N-carbamoyl-L-aspartate + H(+). Its pathway is pyrimidine metabolism; UMP biosynthesis via de novo pathway; (S)-dihydroorotate from bicarbonate: step 3/3. Its function is as follows. Catalyzes the reversible cyclization of carbamoyl aspartate to dihydroorotate. The chain is Dihydroorotase from Acinetobacter baumannii (strain AB307-0294).